Reading from the N-terminus, the 292-residue chain is D-alanyl-D-alanine endopeptidase (292 aa).

Positions 1-18 (MFKKALFILSLCPSFALA) are cleaved as a signal peptide. The active-site Acyl-ester intermediate is serine 45. The Proton acceptor role is filled by lysine 48. Serine 102 is an active-site residue. Lysine 207 lines the substrate pocket.

Belongs to the peptidase S11 family.

It localises to the periplasm. Functionally, cell wall formation. May play a specialized role in remodeling the cell wall. Specifically hydrolyzes the DD-diaminopimelate-alanine bonds in high-molecular-mass murein sacculi. This Haemophilus influenzae (strain ATCC 51907 / DSM 11121 / KW20 / Rd) protein is D-alanyl-D-alanine endopeptidase (pbpG).